We begin with the raw amino-acid sequence, 189 residues long: Interferon alpha-4 (189 aa).

An N-terminal signal peptide occupies residues 1 to 23; sequence MALSFSLLMAVLVLSYKSICSLG. 2 cysteine pairs are disulfide-bonded: Cys-24/Cys-122 and Cys-52/Cys-162.

This sequence belongs to the alpha/beta interferon family.

It localises to the secreted. Its function is as follows. Produced by macrophages, IFN-alpha have antiviral activities. Interferon stimulates the production of two enzymes: a protein kinase and an oligoadenylate synthetase. The chain is Interferon alpha-4 (IFNA4) from Homo sapiens (Human).